A 95-amino-acid chain; its full sequence is Protein TusB (95 aa).

This sequence belongs to the DsrH/TusB family. As to quaternary structure, heterohexamer, formed by a dimer of trimers. The hexameric TusBCD complex contains 2 copies each of TusB, TusC and TusD. The TusBCD complex interacts with TusE.

It localises to the cytoplasm. Part of a sulfur-relay system required for 2-thiolation of 5-methylaminomethyl-2-thiouridine (mnm(5)s(2)U) at tRNA wobble positions. The protein is Protein TusB of Yersinia enterocolitica serotype O:8 / biotype 1B (strain NCTC 13174 / 8081).